A 478-amino-acid polypeptide reads, in one-letter code: Stromelysin-1 (478 aa).

The signal sequence occupies residues 1–17 (MQNLPALLLFCGVVCSA). The propeptide at 18–99 (YPVDRAAEDE…PRCGVPDVGD (82 aa)) is activation peptide. A Cysteine switch motif is present at residues 90 to 97 (PRCGVPDV). C92 contacts Zn(2+). Residues D124 and D158 each contribute to the Ca(2+) site. Zn(2+) is bound by residues H168 and D170. The Ca(2+) site is built by D175, G176, G178, and V180. H183 is a Zn(2+) binding site. G190 and D194 together coordinate Ca(2+). H196 is a binding site for Zn(2+). Ca(2+) is bound by residues D198, D199, and E201. Position 218 (H218) interacts with Zn(2+). The active site involves E219. Zn(2+) is bound by residues H222 and H228. The interval 260 to 286 (QSLYGGPPSDSSNDPVVPTESVPPGPG) is disordered. Over residues 266–277 (PPSDSSNDPVVP) the composition is skewed to low complexity. 4 Hemopexin repeats span residues 288–337 (PAAC…WPSL), 338–384 (PSGL…GFPP), 386–434 (VKKI…FPGV), and 435–478 (DSKV…WLNC). C291 and C478 are oxidised to a cystine. Residue D298 participates in Ca(2+) binding. Positions 390 and 439 each coordinate Ca(2+). N-linked (GlcNAc...) asparagine glycosylation is present at N452.

Belongs to the peptidase M10A family. It depends on Ca(2+) as a cofactor. The cofactor is Zn(2+).

It localises to the secreted. Its subcellular location is the extracellular space. The protein resides in the extracellular matrix. The enzyme catalyses Preferential cleavage where P1', P2' and P3' are hydrophobic residues.. Its function is as follows. Metalloproteinase with a rather broad substrate specificity that can degrade fibronectin, laminin, gelatins of type I, III, IV, and V; collagens III, IV, X, and IX, and cartilage proteoglycans. Activates different molecules including growth factors, plasminogen or other matrix metalloproteinases such as MMP9. Once released into the extracellular matrix (ECM), the inactive pro-enzyme is activated by the plasmin cascade signaling pathway. Also acts intracellularly. For example, in dopaminergic neurons, gets activated by the serine protease HTRA2 upon stress and plays a pivotal role in DA neuronal degeneration by mediating microglial activation and alpha-synuclein/SNCA cleavage. In addition, plays a role in immune response and possesses antiviral activity against various viruses. Mechanistically, translocates from the cytoplasm into the cell nucleus upon virus infection to influence NF-kappa-B activities. This Canis lupus familiaris (Dog) protein is Stromelysin-1 (MMP3).